Here is a 276-residue protein sequence, read N- to C-terminus: Microtubule-associated protein RP/EB family member 1A (276 aa).

The Calponin-homology (CH) domain occupies 13-115 (FVGRNEILTW…FLQWLKRFCD (103 aa)). Residues 124–172 (ENYNPVERRSRNGKERSVKGSNKIPKSLQTNNNHPPPNSSSVGLSKASG) form a disordered region. Residues 129–141 (VERRSRNGKERSV) show a composition bias toward basic and acidic residues. A compositionally biased stretch (low complexity) spans 162–172 (SSSVGLSKASG). In terms of domain architecture, EB1 C-terminal spans 173–243 (PKSAKAAEVQ…LYATDANESA (71 aa)). A disordered region spans residues 252–276 (NQSLGVEDDEAEGNGEQLEEEKTQA). Acidic residues predominate over residues 257–270 (VEDDEAEGNGEQLE).

Belongs to the MAPRE family. As to quaternary structure, homodimer and heterodimer with EB1B. Interacts with tobamovirus movement protein. In terms of tissue distribution, highly expressed in guard cells of leaf stomata, pollen grains and pollen tubes. Expressed in young roots.

Its subcellular location is the cytoplasm. The protein resides in the cytoskeleton. It is found in the spindle pole. The protein localises to the phragmoplast. In terms of biological role, binds to the plus end of microtubules and regulates the dynamics of the microtubule cytoskeleton. May be involved in anchoring microtubules to their nucleation sites and/or functioning as a reservoir for distribution to the growing end. In plants, microtubule minus ends are not necessarily severed from the nucleation site and transported to the plus end of a microtubule as part of the recycling process. May play a role in endomembrane organization during polarized growth of plant cells. Interacts with the tobamovirus movement protein (MP) and may play a role in the association of MP with the microtubule system during infection. This Arabidopsis thaliana (Mouse-ear cress) protein is Microtubule-associated protein RP/EB family member 1A (EB1A).